Here is an 892-residue protein sequence, read N- to C-terminus: DNA ligase (892 aa).

Residues 1-23 (MTMTNRDDSEQLAWDFDAPESDG) are disordered. NAD(+) contacts are provided by residues 99-103 (DAAYD), 148-149 (SL), and Glu-182. Lys-184 acts as the N6-AMP-lysine intermediate in catalysis. 4 residues coordinate NAD(+): Arg-205, Glu-244, Lys-369, and Lys-393. Residues Cys-490, Cys-493, Cys-509, and Cys-515 each contribute to the Zn(2+) site. In terms of domain architecture, BRCT spans 810–892 (GLPQTLAGKT…KQLLDTGTVE (83 aa)).

Belongs to the NAD-dependent DNA ligase family. LigA subfamily. Mg(2+) serves as cofactor. It depends on Mn(2+) as a cofactor.

The catalysed reaction is NAD(+) + (deoxyribonucleotide)n-3'-hydroxyl + 5'-phospho-(deoxyribonucleotide)m = (deoxyribonucleotide)n+m + AMP + beta-nicotinamide D-nucleotide.. DNA ligase that catalyzes the formation of phosphodiester linkages between 5'-phosphoryl and 3'-hydroxyl groups in double-stranded DNA using NAD as a coenzyme and as the energy source for the reaction. It is essential for DNA replication and repair of damaged DNA. This Bifidobacterium adolescentis (strain ATCC 15703 / DSM 20083 / NCTC 11814 / E194a) protein is DNA ligase.